The primary structure comprises 799 residues: Putative aconitate hydratase, mitochondrial (799 aa).

The N-terminal 32 residues, 1 to 32, are a transit peptide targeting the mitochondrion; it reads MVRQLVWQRATASRRLAPKCLSPQQLFARRGL. Residues Gln108 and 201–203 each bind substrate; that span reads DSH. Residues Cys399, Cys462, and Cys465 each coordinate [4Fe-4S] cluster. Substrate contacts are provided by Arg489 and Arg494. The segment at 538–564 is disordered; that stretch reads KFRPPQGSDLPSAGFADGNPALQPSAG. 685–686 provides a ligand contact to substrate; that stretch reads AR.

The protein belongs to the aconitase/IPM isomerase family.

The protein localises to the mitochondrion. Its function is as follows. Has no detectable activity towards cis-acontiate or cis-homoaconitate. The protein is Putative aconitate hydratase, mitochondrial (acoB) of Aspergillus fumigatus (strain ATCC MYA-4609 / CBS 101355 / FGSC A1100 / Af293) (Neosartorya fumigata).